A 361-amino-acid chain; its full sequence is Protein SGT1 homolog (361 aa).

TPR repeat units lie at residues 3-36, 37-70, and 71-104; these read ASDL…GPAT, ADLY…DPTM, and HKAY…APGD. Position 150 is a phosphothreonine (Thr150). In terms of domain architecture, CS spans 159–248; the sequence is KPKYRHDYYN…AEQVTWTTLD (90 aa). A disordered region spans residues 255–295; it reads AIPQKISTPAETAPRPSYPSSKSKKDWDKLEAEVKKEEKEE. Phosphothreonine is present on Thr262. The SGS domain occupies 271–361; the sequence is SYPSSKSKKD…DGMELKKWEI (91 aa). Positions 277–295 are enriched in basic and acidic residues; the sequence is SKKDWDKLEAEVKKEEKEE.

Belongs to the SGT1 family. Constitutively phosphorylated at Thr-262 and phosphorylated at Thr-150 upon infection with the fungal pathogen Ustilago maydis.

The protein localises to the cytoplasm. Its subcellular location is the nucleus. May act as positive regulator of basal defense. May be involved in basal disease resistance to the fungal pathogen Ustilago maydis. This chain is Protein SGT1 homolog, found in Zea mays (Maize).